Consider the following 225-residue polypeptide: Ribose-5-phosphate isomerase A (225 aa).

Substrate is bound by residues T26–T29, D82–D85, and K95–G98. E104 (proton acceptor) is an active-site residue. K122 provides a ligand contact to substrate.

Belongs to the ribose 5-phosphate isomerase family. As to quaternary structure, homodimer.

It carries out the reaction aldehydo-D-ribose 5-phosphate = D-ribulose 5-phosphate. The protein operates within carbohydrate degradation; pentose phosphate pathway; D-ribose 5-phosphate from D-ribulose 5-phosphate (non-oxidative stage): step 1/1. Catalyzes the reversible conversion of ribose-5-phosphate to ribulose 5-phosphate. The protein is Ribose-5-phosphate isomerase A of Streptococcus mutans serotype c (strain ATCC 700610 / UA159).